The following is a 190-amino-acid chain: Imidazole glycerol phosphate synthase subunit HisH (190 aa).

The region spanning 2 to 190 (IVGVVDYTVG…IKRFLAVAKR (189 aa)) is the Glutamine amidotransferase type-1 domain. The active-site Nucleophile is the Cys73. Residues His169 and Glu171 contribute to the active site.

In terms of assembly, heterodimer of HisH and HisF.

It localises to the cytoplasm. The catalysed reaction is 5-[(5-phospho-1-deoxy-D-ribulos-1-ylimino)methylamino]-1-(5-phospho-beta-D-ribosyl)imidazole-4-carboxamide + L-glutamine = D-erythro-1-(imidazol-4-yl)glycerol 3-phosphate + 5-amino-1-(5-phospho-beta-D-ribosyl)imidazole-4-carboxamide + L-glutamate + H(+). It catalyses the reaction L-glutamine + H2O = L-glutamate + NH4(+). The protein operates within amino-acid biosynthesis; L-histidine biosynthesis; L-histidine from 5-phospho-alpha-D-ribose 1-diphosphate: step 5/9. In terms of biological role, IGPS catalyzes the conversion of PRFAR and glutamine to IGP, AICAR and glutamate. The HisH subunit catalyzes the hydrolysis of glutamine to glutamate and ammonia as part of the synthesis of IGP and AICAR. The resulting ammonia molecule is channeled to the active site of HisF. This chain is Imidazole glycerol phosphate synthase subunit HisH, found in Pyrobaculum aerophilum (strain ATCC 51768 / DSM 7523 / JCM 9630 / CIP 104966 / NBRC 100827 / IM2).